Here is a 486-residue protein sequence, read N- to C-terminus: Betaine aldehyde dehydrogenase (486 aa).

Residues T23 and D90 each coordinate K(+). 147-149 serves as a coordination point for NAD(+); it reads GAW. The active-site Charge relay system is the K159. NAD(+) is bound by residues 173–176 and 226–229; these read KPSE and ESGT. L241 lines the K(+) pocket. E247 functions as the Proton acceptor in the catalytic mechanism. NAD(+) is bound by residues G249, C281, and E382. Catalysis depends on C281, which acts as the Nucleophile. C281 is subject to Cysteine sulfenic acid (-SOH). K(+)-binding residues include K452 and G455. The active-site Charge relay system is E459.

It belongs to the aldehyde dehydrogenase family. Dimer of dimers. Requires K(+) as cofactor.

It carries out the reaction betaine aldehyde + NAD(+) + H2O = glycine betaine + NADH + 2 H(+). It participates in amine and polyamine biosynthesis; betaine biosynthesis via choline pathway; betaine from betaine aldehyde: step 1/1. Its function is as follows. Involved in the biosynthesis of the osmoprotectant glycine betaine. Catalyzes the irreversible oxidation of betaine aldehyde to the corresponding acid. The sequence is that of Betaine aldehyde dehydrogenase from Vibrio parahaemolyticus serotype O3:K6 (strain RIMD 2210633).